The chain runs to 189 residues: GTPase NRas (189 aa).

Residues 10-18 (GAGGVGKSA) and 29-30 (VD) each bind GTP. The Effector region signature appears at 32 to 40 (YDPTIEDSY). 57 to 61 (DTAGQ) serves as a coordination point for GTP. S89 is subject to Phosphoserine. 116–119 (NKCD) is a GTP binding site. The tract at residues 166–185 (YRMKKLNSNDDGTQGCMGLP) is hypervariable region. Residue K170 forms a Glycyl lysine isopeptide (Lys-Gly) (interchain with G-Cter in ubiquitin) linkage. C181 is lipidated: S-palmitoyl cysteine. C186 carries the S-farnesyl cysteine lipid modification. The propeptide at 187–189 (VVM) is removed in mature form.

This sequence belongs to the small GTPase superfamily. Ras family. In terms of assembly, interacts (active GTP-bound form preferentially) with RGS14. Interacts (active GTP-bound form) with RASSF7. Interacts (active GTP-bound form) with both SHOC2 and PP1c (all isoforms) to form a tertiary complex; SHOC2 and PP1c preferably bind M-Ras/MRAS, but they also bind K-Ras/KRAS, N-Ras/NRAS and H-Ras/HRAS. In terms of processing, palmitoylated by the ZDHHC9-GOLGA7 complex. Depalmitoylated by ABHD17A, ABHD17B and ABHD17C. A continuous cycle of de- and re-palmitoylation regulates rapid exchange between plasma membrane and Golgi. Post-translationally, acetylation at Lys-104 prevents interaction with guanine nucleotide exchange factors (GEFs). Ubiquitinated by the BCR(LZTR1) E3 ubiquitin ligase complex at Lys-170 in a non-degradative manner, leading to inhibit Ras signaling by decreasing Ras association with membranes. In terms of processing, phosphorylation at Ser-89 enhances NRAS association with its downstream effectors.

It localises to the cell membrane. The protein localises to the golgi apparatus membrane. The catalysed reaction is GTP + H2O = GDP + phosphate + H(+). Alternates between an inactive form bound to GDP and an active form bound to GTP. Activated by a guanine nucleotide-exchange factor (GEF) and inactivated by a GTPase-activating protein (GAP). Functionally, ras proteins bind GDP/GTP and possess intrinsic GTPase activity. This chain is GTPase NRas (NRAS), found in Cavia porcellus (Guinea pig).